The following is a 337-amino-acid chain: Cytoskeleton protein RodZ (337 aa).

At Met-1–Gly-111 the chain is on the cytoplasmic side. One can recognise an HTH cro/C1-type domain in the interval Leu-19 to Leu-71. Residues Gln-30–Glu-49 constitute a DNA-binding region (H-T-H motif). The chain crosses the membrane as a helical; Signal-anchor for type II membrane protein span at residues Trp-112–Trp-132. At Trp-133–Gln-337 the chain is on the periplasmic side. Residues Thr-144–Asn-167 show a composition bias toward polar residues. A disordered region spans residues Thr-144–Ala-235. The span at Thr-168–Gln-207 shows a compositional bias: low complexity. Over residues Asn-208 to Val-218 the composition is skewed to polar residues. The segment covering Asp-219–Ala-235 has biased composition (low complexity).

This sequence belongs to the RodZ family.

It localises to the cell inner membrane. Its function is as follows. Cytoskeletal protein that is involved in cell-shape control through regulation of the length of the long axis. In Escherichia coli (strain K12 / MC4100 / BW2952), this protein is Cytoskeleton protein RodZ.